Reading from the N-terminus, the 432-residue chain is SVP1-like protein 2 (432 aa).

WD repeat units follow at residues 223 to 263 (AHKS…LLYE) and 268 to 307 (LDRA…TSSG).

The protein belongs to the WD repeat PROPPIN family.

It is found in the vacuole membrane. The protein resides in the cytoplasmic vesicle membrane. Its function is as follows. Involved in mitochondrial or peroxisomal functions and amino acid signaling pathways. This chain is SVP1-like protein 2 (HSV2), found in Debaryomyces hansenii (strain ATCC 36239 / CBS 767 / BCRC 21394 / JCM 1990 / NBRC 0083 / IGC 2968) (Yeast).